A 442-amino-acid polypeptide reads, in one-letter code: MKAEGLSGGYGDSRLINNVSLTVEKGEFLGILGPNGSGKTTLLHLLTGTLPAKKGRVYLAGKLLADYKPKELAQIMAVLPQKMDQAFTFTVEETVAFGRYPFQTGLFRQQTEKGEAIVQEAMEQTGVADFAQKPIRELSGGEQQRVYLAQALAQQPRILFLDEPTNFLDLAYQKDLLDLIKRLTRESGLAAVSVFHDLNTASLYCDGLMFMKNGTAGPKQKPEYAVTEQSIKAVYDTDVTALVHQSSPKPMIVIQPEKDSVKRQSIPFEALLQAGRDDILLQTEIPLRTLSSTPIGAGFSWSRTLIHKRLPDQPDPIEGLTACLSESGFQLQETCAMASSERLDRFVYRTYEDGELSVFICVQTGFSIWILINGYAADQFFIKALMAAEAERTKVLGDGGGTGDILIAATQTQQSENIEQRLNQLIKKGTAECIKEAAELFE.

An ABC transporter domain is found at 1 to 238 (MKAEGLSGGY…QSIKAVYDTD (238 aa)). 33–40 (GPNGSGKT) serves as a coordination point for ATP.

It belongs to the ABC transporter superfamily. The complex is composed of two ATP-binding proteins (YvrA), two transmembrane proteins (YvrB) and a solute-binding protein (YvrC).

Functionally, probably part of an ABC transporter complex. Probably responsible for energy coupling to the transport system. This is an uncharacterized protein from Bacillus subtilis (strain 168).